The primary structure comprises 153 residues: FAD synthase (153 aa).

ATP contacts are provided by residues 9 to 10 (TF), 14 to 17 (HPGH), D97, and Y124.

Belongs to the archaeal FAD synthase family. As to quaternary structure, homodimer. A divalent metal cation is required as a cofactor.

The enzyme catalyses FMN + ATP + H(+) = FAD + diphosphate. Its pathway is cofactor biosynthesis; FAD biosynthesis; FAD from FMN: step 1/1. In terms of biological role, catalyzes the transfer of the AMP portion of ATP to flavin mononucleotide (FMN) to produce flavin adenine dinucleotide (FAD) coenzyme. This is FAD synthase from Methanobrevibacter smithii (strain ATCC 35061 / DSM 861 / OCM 144 / PS).